The chain runs to 403 residues: Tryptophan synthase beta chain 1 (403 aa).

Lysine 93 carries the N6-(pyridoxal phosphate)lysine modification.

The protein belongs to the TrpB family. In terms of assembly, tetramer of two alpha and two beta chains. Pyridoxal 5'-phosphate is required as a cofactor.

The catalysed reaction is (1S,2R)-1-C-(indol-3-yl)glycerol 3-phosphate + L-serine = D-glyceraldehyde 3-phosphate + L-tryptophan + H2O. It participates in amino-acid biosynthesis; L-tryptophan biosynthesis; L-tryptophan from chorismate: step 5/5. Its function is as follows. The beta subunit is responsible for the synthesis of L-tryptophan from indole and L-serine. The polypeptide is Tryptophan synthase beta chain 1 (trpB1) (Methanosarcina acetivorans (strain ATCC 35395 / DSM 2834 / JCM 12185 / C2A)).